A 294-amino-acid chain; its full sequence is UDP-3-O-acyl-N-acetylglucosamine deacetylase (294 aa).

Zn(2+) contacts are provided by His75, His232, and Asp236. Catalysis depends on His259, which acts as the Proton donor.

The protein belongs to the LpxC family. Zn(2+) serves as cofactor.

The catalysed reaction is a UDP-3-O-[(3R)-3-hydroxyacyl]-N-acetyl-alpha-D-glucosamine + H2O = a UDP-3-O-[(3R)-3-hydroxyacyl]-alpha-D-glucosamine + acetate. Its pathway is glycolipid biosynthesis; lipid IV(A) biosynthesis; lipid IV(A) from (3R)-3-hydroxytetradecanoyl-[acyl-carrier-protein] and UDP-N-acetyl-alpha-D-glucosamine: step 2/6. Catalyzes the hydrolysis of UDP-3-O-myristoyl-N-acetylglucosamine to form UDP-3-O-myristoylglucosamine and acetate, the committed step in lipid A biosynthesis. This is UDP-3-O-acyl-N-acetylglucosamine deacetylase from Campylobacter jejuni subsp. doylei (strain ATCC BAA-1458 / RM4099 / 269.97).